The chain runs to 490 residues: MPRFPDQLLYIGGRYVPARGGHTFEVVNPATGEVLANVHNADADDLDAAVDSAKAGQRHWAALTVVERSRILLRAVALLRERNDALAELETLNTGKPLSETRSVDIVTGADVLEYYAGVAQALQGVQVPLREGSFFYTRHEPLGVVGAIGAWNYPIQIALWKAAPALAAGNAMIFKPSEVTPLTALKLAEIFTEAGLPDGVFNVLPGDGASVGHALTEHPEIEKISFTGGTATGRKVMASASSSSLKDVTMELGGKSPLIVCADADLDLAADIAMMANFYSSGQVCTNGTRVFVPRALRTAFEARLLARVQRIHIGDPLDERTTFGPMVSAAHMQRVLEHIEQGKAEGARLLFGGERLRDGALAQGCYVAPTIFSDCTDVMTIVREEIFGPVLSLLTYDDEDEAITRANATSYGLAAGVVTPDLSRAHRLIHRLEAGICWINTWGESPAPMPVGGYKQSGVGRENGLATLQAYTRTKSVQVELERYASVF.

A K(+)-binding site is contributed by N93. Position 150-152 (150-152 (GAW)) interacts with NAD(+). The active-site Charge relay system is K162. 176–179 (KPSE) is a binding site for NAD(+). V180 contributes to the K(+) binding site. Position 230 to 233 (230 to 233 (GTAT)) interacts with NAD(+). Position 246 (L246) interacts with K(+). E252 serves as the catalytic Proton acceptor. NAD(+) contacts are provided by G254, C286, and E387. Catalysis depends on C286, which acts as the Nucleophile. C286 is subject to Cysteine sulfenic acid (-SOH). K(+)-binding residues include K457 and G460. E464 acts as the Charge relay system in catalysis.

Belongs to the aldehyde dehydrogenase family. Dimer of dimers. The cofactor is K(+).

It catalyses the reaction betaine aldehyde + NAD(+) + H2O = glycine betaine + NADH + 2 H(+). It participates in amine and polyamine biosynthesis; betaine biosynthesis via choline pathway; betaine from betaine aldehyde: step 1/1. Functionally, involved in the biosynthesis of the osmoprotectant glycine betaine. Catalyzes the irreversible oxidation of betaine aldehyde to the corresponding acid. The protein is Betaine aldehyde dehydrogenase of Xanthomonas campestris pv. campestris (strain ATCC 33913 / DSM 3586 / NCPPB 528 / LMG 568 / P 25).